The sequence spans 830 residues: BLOC-2 complex member HPS5 homolog (830 aa).

WD repeat units follow at residues 25–64 (RNNS…FLAI), 67–106 (SQLG…STDG), and 114–153 (GGPA…GRNI). The stretch at 578–604 (DTETIVRLLRKLETLMEENEEPNARLK) forms a coiled coil.

It belongs to the HPS5 family.

In terms of biological role, has a role in the biogenesis of eye pigment granules. Eye pigment granules are specialized forms of late endosomes or lysosomes. Biogenesis of pigment granules in the eye requires molecular components required for protein delivery to lysosomes. This chain is BLOC-2 complex member HPS5 homolog, found in Anopheles gambiae (African malaria mosquito).